The following is a 381-amino-acid chain: Chorismate synthase (381 aa).

NADP(+) is bound by residues Arg41 and Arg47. Residues 127–129, 247–248, Gly291, 306–310, and Arg332 each bind FMN; these read RAS, QA, and KPIPT.

The protein belongs to the chorismate synthase family. In terms of assembly, homotetramer. The cofactor is FMNH2.

It catalyses the reaction 5-O-(1-carboxyvinyl)-3-phosphoshikimate = chorismate + phosphate. It participates in metabolic intermediate biosynthesis; chorismate biosynthesis; chorismate from D-erythrose 4-phosphate and phosphoenolpyruvate: step 7/7. Catalyzes the anti-1,4-elimination of the C-3 phosphate and the C-6 proR hydrogen from 5-enolpyruvylshikimate-3-phosphate (EPSP) to yield chorismate, which is the branch point compound that serves as the starting substrate for the three terminal pathways of aromatic amino acid biosynthesis. This reaction introduces a second double bond into the aromatic ring system. This is Chorismate synthase from Anaeromyxobacter sp. (strain K).